Consider the following 40-residue polypeptide: MKVRNSIKALKKLPGAQVVRRRGRVFVINKQNPRNKARQG.

Belongs to the bacterial ribosomal protein bL36 family.

In Clavibacter michiganensis subsp. michiganensis (strain NCPPB 382), this protein is Large ribosomal subunit protein bL36B.